The following is a 469-amino-acid chain: uncharacterized protein (469 aa).

Disordered stretches follow at residues Arg248–Ser314 and Gln327–Thr418. Composition is skewed to polar residues over residues Glu292–Ser305 and Thr350–Val365. Residues Thr366 to Ser377 are compositionally biased toward low complexity.

This is an uncharacterized protein from Cryphonectria parasitica (Chestnut blight fungus).